Consider the following 460-residue polypeptide: tRNA modification GTPase MnmE (460 aa).

Positions 29, 91, and 132 each coordinate (6S)-5-formyl-5,6,7,8-tetrahydrofolate. In terms of domain architecture, TrmE-type G spans 227-383; the sequence is GISIALIGKT…LIDTIIKKCG (157 aa). Residue N237 participates in K(+) binding. Residues 237-242, 256-262, and 281-284 contribute to the GTP site; these read NVGKSS, TNIPGTT, and DTAG. S241 is a Mg(2+) binding site. The K(+) site is built by T256, I258, and T261. Mg(2+) is bound at residue T262. A (6S)-5-formyl-5,6,7,8-tetrahydrofolate-binding site is contributed by K460.

This sequence belongs to the TRAFAC class TrmE-Era-EngA-EngB-Septin-like GTPase superfamily. TrmE GTPase family. In terms of assembly, homodimer. Heterotetramer of two MnmE and two MnmG subunits. The cofactor is K(+).

It localises to the cytoplasm. Its function is as follows. Exhibits a very high intrinsic GTPase hydrolysis rate. Involved in the addition of a carboxymethylaminomethyl (cmnm) group at the wobble position (U34) of certain tRNAs, forming tRNA-cmnm(5)s(2)U34. This Prochlorococcus marinus (strain MIT 9301) protein is tRNA modification GTPase MnmE.